Here is a 135-residue protein sequence, read N- to C-terminus: C-type lectin BpLec (135 aa).

Disulfide bonds link cysteine 3–cysteine 14, cysteine 31–cysteine 131, cysteine 38–cysteine 133, and cysteine 106–cysteine 123. Residues methionine 10 to glutamine 132 form the C-type lectin domain. Glutamine 96, aspartate 98, glutamate 104, asparagine 119, and aspartate 120 together coordinate Ca(2+). The Galactose-binding motif lies at glutamine 96–aspartate 98.

Belongs to the true venom lectin family. As to quaternary structure, homodimer; disulfide-linked. Expressed by the venom gland.

It localises to the secreted. In terms of biological role, this lectin displays hemagglutinating activity on dog (128'000 HU/mg) and cat erythrocytes, that is inhibited by beta-galactosides (D-galactose, D-lactose, and N-acetyl-D-galactosamine) and EDTA. In addition, has been shown to hemagglutinate promastigote forms of Leishmania amazonensis. Also inhibits Gram-positive (S.aureus ATCC 25923) (MIC is 31.25 ug/ml) but not Gram-negative (E.coli ATCC 25922) bacteria. Is a calcium-dependent lectin. This is C-type lectin BpLec from Bothrops pauloensis (Neuwied's lancehead).